The following is a 206-amino-acid chain: LOB domain-containing protein 35 (206 aa).

Residues 4–105 form the LOB domain; it reads TCCSACKVMK…EQINSAKNEL (102 aa). A disordered region spans residues 184–206; sequence ASTSGGTSATQKTLPFPQNHNQP.

It belongs to the LOB domain-containing protein family.

The protein is LOB domain-containing protein 35 (LBD35) of Arabidopsis thaliana (Mouse-ear cress).